Consider the following 148-residue polypeptide: MKAVIILGLVLLSVTVQGKIFERCELARTLKRLGLDGYRGISLANWVCLAKWESDYNTQATNYNPGDQSTDYGIFQINSHYWCNNGKTPGAVNACHISCNALLQDNIADAVTCAKRVVRDPQGIRAWVAWRNHCHNRDVSQYVQGCGV.

Positions 1-18 (MKAVIILGLVLLSVTVQG) are cleaved as a signal peptide. The C-type lysozyme domain maps to 19-148 (KIFERCELAR…VSQYVQGCGV (130 aa)). Intrachain disulfides connect cysteine 24–cysteine 146, cysteine 48–cysteine 134, cysteine 83–cysteine 99, and cysteine 95–cysteine 113. Active-site residues include glutamate 53 and aspartate 71.

It belongs to the glycosyl hydrolase 22 family. As to quaternary structure, monomer.

The protein localises to the secreted. It catalyses the reaction Hydrolysis of (1-&gt;4)-beta-linkages between N-acetylmuramic acid and N-acetyl-D-glucosamine residues in a peptidoglycan and between N-acetyl-D-glucosamine residues in chitodextrins.. Its function is as follows. Lysozymes have primarily a bacteriolytic function; those in tissues and body fluids are associated with the monocyte-macrophage system and enhance the activity of immunoagents. The protein is Lysozyme C (LYZ) of Miopithecus talapoin (Angolan talapoin).